A 669-amino-acid polypeptide reads, in one-letter code: DNA ligase (669 aa).

Residues 34 to 38 (DAEYD), 83 to 84 (SL), and glutamate 114 contribute to the NAD(+) site. Lysine 116 (N6-AMP-lysine intermediate) is an active-site residue. Residues arginine 137, glutamate 171, lysine 287, and lysine 311 each contribute to the NAD(+) site. Residues cysteine 405, cysteine 408, cysteine 423, and cysteine 428 each contribute to the Zn(2+) site. The region spanning 591 to 669 (NVESYFAGKT…EERFLQELNK (79 aa)) is the BRCT domain.

Belongs to the NAD-dependent DNA ligase family. LigA subfamily. The cofactor is Mg(2+). It depends on Mn(2+) as a cofactor.

The catalysed reaction is NAD(+) + (deoxyribonucleotide)n-3'-hydroxyl + 5'-phospho-(deoxyribonucleotide)m = (deoxyribonucleotide)n+m + AMP + beta-nicotinamide D-nucleotide.. In terms of biological role, DNA ligase that catalyzes the formation of phosphodiester linkages between 5'-phosphoryl and 3'-hydroxyl groups in double-stranded DNA using NAD as a coenzyme and as the energy source for the reaction. It is essential for DNA replication and repair of damaged DNA. The chain is DNA ligase from Bacillus cereus (strain ZK / E33L).